The following is a 444-amino-acid chain: Ribulose bisphosphate carboxylase large chain (444 aa).

Lysine 5 carries the N6,N6,N6-trimethyllysine modification. Asparagine 114 and threonine 164 together coordinate substrate. Lysine 166 acts as the Proton acceptor in catalysis. A substrate-binding site is contributed by lysine 168. Residues lysine 192, aspartate 194, and glutamate 195 each coordinate Mg(2+). Position 192 is an N6-carboxylysine (lysine 192). The active-site Proton acceptor is histidine 285. The substrate site is built by arginine 286, histidine 318, and serine 370.

This sequence belongs to the RuBisCO large chain family. Type I subfamily. As to quaternary structure, heterohexadecamer of 8 large chains and 8 small chains; disulfide-linked. The disulfide link is formed within the large subunit homodimers. Mg(2+) is required as a cofactor. The disulfide bond which can form in the large chain dimeric partners within the hexadecamer appears to be associated with oxidative stress and protein turnover.

The protein localises to the plastid. It is found in the chloroplast. It carries out the reaction 2 (2R)-3-phosphoglycerate + 2 H(+) = D-ribulose 1,5-bisphosphate + CO2 + H2O. It catalyses the reaction D-ribulose 1,5-bisphosphate + O2 = 2-phosphoglycolate + (2R)-3-phosphoglycerate + 2 H(+). Its function is as follows. RuBisCO catalyzes two reactions: the carboxylation of D-ribulose 1,5-bisphosphate, the primary event in carbon dioxide fixation, as well as the oxidative fragmentation of the pentose substrate in the photorespiration process. Both reactions occur simultaneously and in competition at the same active site. This is Ribulose bisphosphate carboxylase large chain from Botrychium strictum (Fern).